A 380-amino-acid polypeptide reads, in one-letter code: 1-deoxy-D-xylulose 5-phosphate reductoisomerase (380 aa).

NADPH-binding residues include Thr-9, Gly-10, Ser-11, Val-12, Arg-36, and Asn-117. Residue Lys-118 coordinates 1-deoxy-D-xylulose 5-phosphate. Glu-119 is a binding site for NADPH. Asp-139 serves as a coordination point for Mn(2+). Ser-140, Glu-141, Ser-165, and His-188 together coordinate 1-deoxy-D-xylulose 5-phosphate. Glu-141 serves as a coordination point for Mn(2+). Position 194 (Gly-194) interacts with NADPH. 4 residues coordinate 1-deoxy-D-xylulose 5-phosphate: Ser-201, Asn-206, Lys-207, and Glu-210. Residue Glu-210 coordinates Mn(2+).

Belongs to the DXR family. Mg(2+) serves as cofactor. Requires Mn(2+) as cofactor.

The enzyme catalyses 2-C-methyl-D-erythritol 4-phosphate + NADP(+) = 1-deoxy-D-xylulose 5-phosphate + NADPH + H(+). It functions in the pathway isoprenoid biosynthesis; isopentenyl diphosphate biosynthesis via DXP pathway; isopentenyl diphosphate from 1-deoxy-D-xylulose 5-phosphate: step 1/6. Its function is as follows. Catalyzes the NADPH-dependent rearrangement and reduction of 1-deoxy-D-xylulose-5-phosphate (DXP) to 2-C-methyl-D-erythritol 4-phosphate (MEP). The protein is 1-deoxy-D-xylulose 5-phosphate reductoisomerase of Aquifex aeolicus (strain VF5).